The chain runs to 509 residues: Cytochrome P450 monooxygenase fumoA (509 aa).

Residues 5–27 (LANLNFPYLILSACLSAILLSRF) traverse the membrane as a helical segment. N317, N369, and N378 each carry an N-linked (GlcNAc...) asparagine glycan. Heme is bound at residue C456. N-linked (GlcNAc...) asparagine glycosylation occurs at N464.

The protein belongs to the cytochrome P450 family. Requires heme as cofactor.

The protein localises to the membrane. Its pathway is secondary metabolite biosynthesis. In terms of biological role, cytochrome P450 monooxygenase; part of the gene cluster that mediates the biosynthesis of fumosorinone, a 2-pyridone alkaloid that acts as an inhibitor of protein tyrosine phosphatase 1B which is implicated asa negative regulator of insulin receptor signaling and a potential drug target for the treatment of type II diabetes and other associated metabolic syndromes. The polyketide-amino acid backbone of fumosorinone is first assembled by the PKS-NRPS hybrid fumoS. The PKS modules condense one acetyl-CoA starter unit with 7 malonyl-CoA units, programmed C-methylations occurring after the first 3 and the sixth extensions, and cycles of full reduction occurring after the first 2 extensions. Because fumoS lacks a designated enoyl reductase (ER) domain, the required activity is provided the enoyl reductase fumoC. Upon formation of the polyketide backbone on the thiotemplate, the polyketide is transferred to the NRPS module and linked to tyrosine to produce the acyltetramic acid intermediate called prefumosorinone A. The cytochrome P450 monooxygenase fumoA then probably catalyzes an unprecedented oxidative ring expansion of prefumosorinone A to form prefumosorinone B which contains the 2-pyridone core of fumosorinone. The cytochrome P450 monooxygenase fumoB might hydroxylate the nitrogen of prefumosorinone B, but not the acyltetramic acid prefumosorinone A, to form fumosorinone. This Cordyceps fumosorosea (strain ARSEF 2679) (Isaria fumosorosea) protein is Cytochrome P450 monooxygenase fumoA.